The sequence spans 267 residues: MKKILLTVSLGLALSACATQGTVDKDAQITQDWSVEKLYAEAQDELNSSNYTRAVKLYEILESRFPTSRHARQSQLDTAYAYYKDDEKDKALAAIERFRRLHPQHPNMDYALYLRGLVLFNEDQSFLNKLASQDWSDRDPKANREAYQAFAELVQRFPNSKYAADATARMVKLVDALGGNEMSVARYYMKRGAYIAAANRAQKIIGSYQNTRYVEESLAILELAYQKLGKPQLAADTRRVLETNFPKSPFLTHAWQPDDMPWWRYWH.

The signal sequence occupies residues 1–16; the sequence is MKKILLTVSLGLALSA. Cys17 carries the N-palmitoyl cysteine lipid modification. Cys17 is lipidated: S-diacylglycerol cysteine.

This sequence belongs to the BamD family. Part of the Bam complex.

It localises to the cell outer membrane. Its function is as follows. Part of the outer membrane protein assembly complex, which is involved in assembly and insertion of beta-barrel proteins into the outer membrane. Required for efficient transformation of Neisseria meningitidis by species-related DNA. The protein is Outer membrane protein assembly factor BamD of Neisseria meningitidis serogroup A / serotype 4A (strain DSM 15465 / Z2491).